The sequence spans 992 residues: GYF domain-containing protein mpd2 (992 aa).

3 disordered regions span residues 24–105, 172–245, and 289–316; these read ANNS…SANP, GTAS…NVAS, and FSQS…MSIR. 2 stretches are compositionally biased toward polar residues: residues 25 to 58 and 75 to 104; these read NNSS…SSHI and KSGN…SSAN. Serine 175 carries the phosphoserine modification. Residues 193 to 205 show a composition bias toward low complexity; it reads SPSSFSQSRSAVS. Polar residues-rich tracts occupy residues 214–237 and 301–315; these read TLQQ…SNQP and FPTN…SMSI. Threonine 318 is modified (phosphothreonine). Phosphoserine is present on serine 320. The interval 336–359 is disordered; sequence KENASQPVAPSASQREHSAVNSPA. Residues 337 to 348 are compositionally biased toward polar residues; the sequence is ENASQPVAPSAS. One can recognise a GYF domain in the interval 386–434; that stretch reads LLHWLYKDPQNNVQGPFTGVDMHQWYRAGYFPLGLPIKRLEEEEYYSLA. Disordered stretches follow at residues 467 to 486, 496 to 563, 576 to 637, 651 to 682, 697 to 729, 760 to 794, 818 to 859, and 940 to 992; these read DLPL…GGNK, EVSN…NESL, SEET…HLPS, SEAL…WAKV, EKQN…LASG, AELA…PSSN, VGPG…SSKL, and TGKD…KKRV. 2 stretches are compositionally biased toward polar residues: residues 474-483 and 507-532; these read LPESSEQNRG and ANSL…NEDS. Serine 509 is modified (phosphoserine). Basic and acidic residues-rich tracts occupy residues 549-561 and 577-595; these read MYEK…HHNE and EETK…ESKR. A compositionally biased stretch (polar residues) spans 596-606; sequence LSTGVQKQSPA. Serine 604 and serine 637 each carry phosphoserine. 2 stretches are compositionally biased toward polar residues: residues 658-676 and 707-721; these read EKSN…SKTG and VASN…NAKA. Phosphoserine is present on residues serine 775, serine 829, serine 838, and serine 840. Polar residues-rich tracts occupy residues 825–859 and 943–966; these read VNQQ…SSKL and DGQQ…SQVV.

It belongs to the SMY2/mpd2 family.

The protein resides in the cytoplasm. Its function is as follows. Has a role in mRNA export from the nucleus. In Schizosaccharomyces pombe (strain 972 / ATCC 24843) (Fission yeast), this protein is GYF domain-containing protein mpd2 (mpd2).